A 217-amino-acid chain; its full sequence is Probable GTP-binding protein EngB (217 aa).

The EngB-type G domain occupies 37-214; that stretch reads SGLEVAFAGR…RAAMARLIGD (178 aa). GTP is bound by residues 45–52, 72–76, 92–95, 159–162, and 193–195; these read GRSNVGKS, GRTQE, DMPG, TKAD, and TSS. Positions 52 and 74 each coordinate Mg(2+).

The protein belongs to the TRAFAC class TrmE-Era-EngA-EngB-Septin-like GTPase superfamily. EngB GTPase family. Mg(2+) is required as a cofactor.

Necessary for normal cell division and for the maintenance of normal septation. The sequence is that of Probable GTP-binding protein EngB from Nitrobacter winogradskyi (strain ATCC 25391 / DSM 10237 / CIP 104748 / NCIMB 11846 / Nb-255).